The sequence spans 535 residues: CTP synthase (535 aa).

An amidoligase domain region spans residues 1–268; the sequence is MPNKYIVVTG…VSKILSRLKL (268 aa). S14 is a CTP binding site. Residue S14 participates in UTP binding. An ATP-binding site is contributed by 15-20; sequence SVGKGT. Y55 serves as a coordination point for L-glutamine. D72 is a binding site for ATP. Mg(2+)-binding residues include D72 and E142. CTP is bound by residues 149 to 151, 189 to 194, and K225; these read DIE and KTKPLQ. UTP-binding positions include 189–194 and K225; that span reads KTKPLQ. V243 is an ATP binding site. Positions 302-535 constitute a Glutamine amidotransferase type-1 domain; that stretch reads YTKLKDSYIS…LGFIRAVASL (234 aa). G359 contributes to the L-glutamine binding site. C386 acts as the Nucleophile; for glutamine hydrolysis in catalysis. L-glutamine is bound by residues 387–390, E410, and R467; that span reads FGFQ. Catalysis depends on residues H511 and E513.

It belongs to the CTP synthase family. As to quaternary structure, homotetramer in the presence of ATP and UTP. The enzyme dissociates into homodimers in the absence of substrate nucleotides.

It carries out the reaction UTP + L-glutamine + ATP + H2O = CTP + L-glutamate + ADP + phosphate + 2 H(+). The enzyme catalyses L-glutamine + H2O = L-glutamate + NH4(+). The catalysed reaction is UTP + NH4(+) + ATP = CTP + ADP + phosphate + 2 H(+). Its pathway is pyrimidine metabolism; CTP biosynthesis via de novo pathway; CTP from UDP: step 2/2. Its activity is regulated as follows. Allosterically activated by GTP, when glutamine is the substrate; GTP has no effect on the reaction when ammonia is the substrate. The allosteric effector GTP functions by stabilizing the protein conformation that binds the tetrahedral intermediate(s) formed during glutamine hydrolysis. Inhibited by the product CTP, via allosteric rather than competitive inhibition. Functionally, catalyzes the ATP-dependent amination of UTP to CTP with either L-glutamine or ammonia as the source of nitrogen. Regulates intracellular CTP levels through interactions with the four ribonucleotide triphosphates. The sequence is that of CTP synthase from Saccharolobus solfataricus (strain ATCC 35092 / DSM 1617 / JCM 11322 / P2) (Sulfolobus solfataricus).